Here is a 60-residue protein sequence, read N- to C-terminus: Small ribosomal subunit protein bS21 (60 aa).

Residues 36 to 60 (QFFETPQEKHKRKEATRRRQRSRRR) form a disordered region. The span at 44 to 60 (KHKRKEATRRRQRSRRR) shows a compositional bias: basic residues.

This sequence belongs to the bacterial ribosomal protein bS21 family.

The polypeptide is Small ribosomal subunit protein bS21 (rpsU) (Synechocystis sp. (strain ATCC 27184 / PCC 6803 / Kazusa)).